We begin with the raw amino-acid sequence, 358 residues long: Heavy metal-associated isoprenylated plant protein 37 (358 aa).

An HMA domain is found at 12–75; it reads IQTFSLRVNI…KLVKAGKHAE (64 aa). A metal cation contacts are provided by cysteine 23 and cysteine 26. Disordered stretches follow at residues 100 to 194 and 332 to 358; these read QKGQ…QNTQ and QQQS…CNIM. A compositionally biased stretch (acidic residues) spans 128–141; the sequence is AEEDGDGSEEEDGD. Low complexity predominate over residues 148-181; it reads ANQQQQQNVVNAKKNSGGAAMNNGNNGVNAASKK. Polar residues-rich tracts occupy residues 184–194 and 339–358; these read QKQSNHNQNTQ and HATN…CNIM. A Cysteine methyl ester modification is found at cysteine 355. Residue cysteine 355 is the site of S-farnesyl cysteine attachment. Residues 356–358 constitute a propeptide, removed in mature form; sequence NIM.

The protein belongs to the HIPP family.

Functionally, heavy-metal-binding protein. This is Heavy metal-associated isoprenylated plant protein 37 from Arabidopsis thaliana (Mouse-ear cress).